The following is a 786-amino-acid chain: Diamine oxidase [copper-containing] 1, peroxisomal (786 aa).

419–430 (AFDAGEDGLGKN) contributes to the substrate binding site. Asp-421 acts as the Proton acceptor in catalysis. An intrachain disulfide couples Cys-440 to Cys-466. Position 502-507 (502-507 (VANYEY)) interacts with substrate. The active-site Schiff-base intermediate with substrate; via topaquinone is the Tyr-505. Tyr-505 is modified (2',4',5'-topaquinone). Cu cation is bound by residues His-555 and His-557. Mn(2+) is bound by residues Asp-710 and Ile-711. Residue His-721 coordinates Cu cation.

It belongs to the copper/topaquinone oxidase family. Homodimer. The cofactor is Cu cation. Requires Zn(2+) as cofactor. L-topaquinone serves as cofactor. Topaquinone (TPQ) is generated by copper-dependent autoxidation of a specific tyrosyl residue. Mainly expressed in roots, and, to a lower extent, in leaves and stems.

It localises to the peroxisome. The catalysed reaction is a primary methyl amine + O2 + H2O = an aldehyde + H2O2 + NH4(+). It carries out the reaction N-methylputrescine + O2 + H2O = 4-methylaminobutanal + H2O2 + NH4(+). The protein operates within alkaloid biosynthesis; nicotine biosynthesis. Its pathway is amine and polyamine degradation; putrescine degradation. In terms of biological role, involved in putrescine catabolism in peroxisomes. May also be involved in the biosynthesis of pyridine alkaloid natural products, leading mainly to the production of anabasine, anatabine, nicotine and nornicotine, effective deterrents against herbivores with antiparasitic and pesticide properties (neurotoxins); nornicotine serves as the precursor in the synthesis of the carcinogen compound N'-nitrosonornicotine (NNN). Oxidizes preferentially non-N-methylated amines. The sequence is that of Diamine oxidase [copper-containing] 1, peroxisomal from Nicotiana tabacum (Common tobacco).